The following is a 128-amino-acid chain: Large ribosomal subunit protein bL17 (128 aa).

Belongs to the bacterial ribosomal protein bL17 family. As to quaternary structure, part of the 50S ribosomal subunit. Contacts protein L32.

The protein is Large ribosomal subunit protein bL17 of Streptococcus gordonii (strain Challis / ATCC 35105 / BCRC 15272 / CH1 / DL1 / V288).